A 180-amino-acid polypeptide reads, in one-letter code: Large ribosomal subunit protein uL5c (180 aa).

This sequence belongs to the universal ribosomal protein uL5 family. Part of the 50S ribosomal subunit; contacts the 5S rRNA.

The protein resides in the plastid. It is found in the chloroplast. Its function is as follows. Binds 5S rRNA, forms part of the central protuberance of the 50S subunit. The protein is Large ribosomal subunit protein uL5c (rpl5) of Stigeoclonium helveticum (Green alga).